Consider the following 509-residue polypeptide: MSEQNWKQNLNLPQRDTRPQTEDVLNTKGKSFEDFNLKRELLMGIFEAGFEKPSPIQEESIPMALAGRDVLARAKNGTGKTASFIIPSLQQIKPKLNKIQALILVPTRELALQTSQVVRTLGKHLGIQCMVTTGGTSLKDDILRLNDPVHVLVGTPGRVLDLAARSVADLSECPLFVMDEADKMLSREFKGIIEQILEFFPKNRQSLLFSATFPLAVKSFMDKHLNKPYEINLMDELTLRGITQYYAFVEEKQKLHCLNTLFSKLQINQSIIFCNSTNRVELLAKKITELGYSCYYSHAKMPQQARNKVFHEFRQGKVRNLVCSDLLTRGIDIQAVNVVINFDFPKTAETYLHRIGRSGRFGHLGLAINLMSWNDRYSLYKIEQELGTEIKPIPATIDRKLYVADNEDAIPKPFKIEQLPKGNEKVHTRAGYEYKGQPEVQSGQQHAQQQLQPSQQPQQQLQQPQQPQAAPQGYPPAFNGYPPYQQYPPQAGGYPPPQFNGYQAAPGQQ.

The segment covering 1–14 has biased composition (polar residues); it reads MSEQNWKQNLNLPQ. The tract at residues 1–27 is disordered; it reads MSEQNWKQNLNLPQRDTRPQTEDVLNT. The short motif at 30 to 58 is the Q motif element; sequence KSFEDFNLKRELLMGIFEAGFEKPSPIQE. Residues 61 to 231 form the Helicase ATP-binding domain; it reads IPMALAGRDV…DKHLNKPYEI (171 aa). Residue 74–81 participates in ATP binding; sequence AKNGTGKT. The short motif at 179–182 is the DEAD box element; the sequence is DEAD. Residues 241 to 401 enclose the Helicase C-terminal domain; that stretch reads GITQYYAFVE…PIPATIDRKL (161 aa). Positions 438–509 are disordered; sequence PEVQSGQQHA…NGYQAAPGQQ (72 aa). The span at 441-493 shows a compositional bias: low complexity; it reads QSGQQHAQQQLQPSQQPQQQLQQPQQPQAAPQGYPPAFNGYPPYQQYPPQAGG.

The protein belongs to the DEAD box helicase family. DDX6/DHH1 subfamily.

The protein resides in the cytoplasm. The protein localises to the P-body. It catalyses the reaction ATP + H2O = ADP + phosphate + H(+). In terms of biological role, ATP-dependent RNA helicase involved in mRNA turnover, and more specifically in mRNA decapping by activating the decapping enzyme DCP1. Is involved in G1/S DNA-damage checkpoint recovery, probably through the regulation of the translational status of a subset of mRNAs. May also have a role in translation and mRNA nuclear export. This chain is ATP-dependent RNA helicase DHH1 (DHH1), found in Scheffersomyces stipitis (strain ATCC 58785 / CBS 6054 / NBRC 10063 / NRRL Y-11545) (Yeast).